A 518-amino-acid chain; its full sequence is Protein nucleotidyltransferase YdiU (518 aa).

Residues G109, G111, R112, K131, D143, G144, R194, and R201 each contribute to the ATP site. D270 serves as the catalytic Proton acceptor. 2 residues coordinate Mg(2+): N271 and D280. Residue D280 participates in ATP binding.

This sequence belongs to the SELO family. Mg(2+) is required as a cofactor. The cofactor is Mn(2+).

It carries out the reaction L-seryl-[protein] + ATP = 3-O-(5'-adenylyl)-L-seryl-[protein] + diphosphate. The enzyme catalyses L-threonyl-[protein] + ATP = 3-O-(5'-adenylyl)-L-threonyl-[protein] + diphosphate. The catalysed reaction is L-tyrosyl-[protein] + ATP = O-(5'-adenylyl)-L-tyrosyl-[protein] + diphosphate. It catalyses the reaction L-histidyl-[protein] + UTP = N(tele)-(5'-uridylyl)-L-histidyl-[protein] + diphosphate. It carries out the reaction L-seryl-[protein] + UTP = O-(5'-uridylyl)-L-seryl-[protein] + diphosphate. The enzyme catalyses L-tyrosyl-[protein] + UTP = O-(5'-uridylyl)-L-tyrosyl-[protein] + diphosphate. Functionally, nucleotidyltransferase involved in the post-translational modification of proteins. It can catalyze the addition of adenosine monophosphate (AMP) or uridine monophosphate (UMP) to a protein, resulting in modifications known as AMPylation and UMPylation. The protein is Protein nucleotidyltransferase YdiU of Paraburkholderia xenovorans (strain LB400).